The sequence spans 382 residues: Sialidase (382 aa).

A substrate-binding site is contributed by Arg-37. A disulfide bridge links Cys-42 with Cys-103. Asp-62 functions as the Proton acceptor in the catalytic mechanism. 3 BNR repeats span residues Ala-71–Lys-82, Tyr-145–Lys-156, and Ile-210–Leu-220. Arg-246 is a substrate binding site. The stretch at Phe-254–Glu-265 is one BNR 4 repeat. Arg-309 contacts substrate. Tyr-342 serves as the catalytic Nucleophile. Glu-361 is an active-site residue.

This sequence belongs to the glycosyl hydrolase 33 family. In terms of assembly, monomer.

It carries out the reaction Hydrolysis of alpha-(2-&gt;3)-, alpha-(2-&gt;6)-, alpha-(2-&gt;8)- glycosidic linkages of terminal sialic acid residues in oligosaccharides, glycoproteins, glycolipids, colominic acid and synthetic substrates.. Its function is as follows. Cleaves the terminal sialic acid (N-acetyl neuraminic acid) from carbohydrate chains in glycoproteins providing free sialic acid which can be used as carbon and energy sources. Sialidases have been suggested to be pathogenic factors in microbial infections. The protein is Sialidase (nanH) of Salmonella typhimurium (strain LT2 / SGSC1412 / ATCC 700720).